Reading from the N-terminus, the 163-residue chain is NADH-quinone oxidoreductase subunit I (163 aa).

4Fe-4S ferredoxin-type domains follow at residues 54–84 (LRRYPNGEERCIACKLCEAVCPALAISIESD) and 94–123 (TRYDIDLTKCIFCGFCEEACPVDAIVETHI). [4Fe-4S] cluster is bound by residues C64, C67, C70, C74, C103, C106, C109, and C113.

This sequence belongs to the complex I 23 kDa subunit family. NDH-1 is composed of 14 different subunits. Subunits NuoA, H, J, K, L, M, N constitute the membrane sector of the complex. [4Fe-4S] cluster is required as a cofactor.

The protein resides in the cell inner membrane. The catalysed reaction is a quinone + NADH + 5 H(+)(in) = a quinol + NAD(+) + 4 H(+)(out). Its function is as follows. NDH-1 shuttles electrons from NADH, via FMN and iron-sulfur (Fe-S) centers, to quinones in the respiratory chain. The immediate electron acceptor for the enzyme in this species is believed to be ubiquinone. Couples the redox reaction to proton translocation (for every two electrons transferred, four hydrogen ions are translocated across the cytoplasmic membrane), and thus conserves the redox energy in a proton gradient. This Cupriavidus metallidurans (strain ATCC 43123 / DSM 2839 / NBRC 102507 / CH34) (Ralstonia metallidurans) protein is NADH-quinone oxidoreductase subunit I.